Reading from the N-terminus, the 717-residue chain is MMTEATKVLYIVVREEGDDDDNNGDDSFRYTRPVLQSTLQLMGCKARHAFKISRRVFELIRSEGSCNTSPENGKEPEFAKEVGGSTCVEKLNCLVVAGDVDKNKSKPFEMYKRRTTVVVSREIFVDVVCDALAEYKYVGRDQRADLILACRIRERKESVTVLLCGTSGCGKSTLSALLGSRLGITTVVSTDSIRHMMRSFADEKQNPLLWASTYHAGEYLDPVAVAESKAKRKAKKLKGSRGVNSNAQKTDAGSNSSTTELLSHKQMAIEGYKAQSEMVIDSLDRLITTWEERNESVVVEGVHLSLNFVMGLMKKHPSIVPFMVYIANEEKHLERFAVRAKYMTLDPAKNKYVKYIRNIRTIQDYLCKRADKHLVPKINNTNVDKSVATIHATVFGCLRRRETGEKLYDTTTNTVSVIDDEHRNQCAANSLTSKGMFQVIQRQGSSRRFMALCNTDGTVAKTWPVASVGKIRKPVVNTEMDDGTEHQLHKAEPVNLQFGHFGISAWPSDGATSHAGSVDDLRADIIETGSRHYSSCCSSPRTSDGPSKELMEEQSVNGSDEDDEEGDDDFHEPDSDEDLSDNNDERNRDEIGSVDEESTKSDEEYDDLAMEDKSYWTDNEEEESRDTISMVSQNNHNEASKTNKDDKYSQNLDLFLKTTNQPLTESLELTSEYRNRMGVAASDKAKMRKRSLSIPPVGKHGSIIDDQILANQTDSVL.

Disordered stretches follow at residues 235–259 (KKLK…SSTT) and 532–629 (HYSS…DTIS). Polar residues-rich tracts occupy residues 243–259 (VNSN…SSTT) and 532–545 (HYSS…TSDG). Residues 559–582 (SDEDDEEGDDDFHEPDSDEDLSDN) are compositionally biased toward acidic residues. The segment covering 583 to 602 (NDERNRDEIGSVDEESTKSD) has biased composition (basic and acidic residues).

Its function is as follows. May be not required for the accumulation of phytic acid in seeds. Phytic acid is the primary storage form of phosphorus in cereal grains and other plant seeds. This chain is P-loop NTPase domain-containing protein LPA1 homolog 2, found in Arabidopsis thaliana (Mouse-ear cress).